A 112-amino-acid polypeptide reads, in one-letter code: Cell cycle protein GpsB (112 aa).

Residues 38-72 (IKDYEAFHKEFEQLKQQNARLKRELEEQKLVATQV) are a coiled coil.

The protein belongs to the GpsB family. Forms polymers through the coiled coil domains. Interacts with PBP1, MreC and EzrA.

The protein localises to the cytoplasm. Functionally, divisome component that associates with the complex late in its assembly, after the Z-ring is formed, and is dependent on DivIC and PBP2B for its recruitment to the divisome. Together with EzrA, is a key component of the system that regulates PBP1 localization during cell cycle progression. Its main role could be the removal of PBP1 from the cell pole after pole maturation is completed. Also contributes to the recruitment of PBP1 to the division complex. Not essential for septum formation. The chain is Cell cycle protein GpsB from Bacillus cereus (strain ZK / E33L).